Consider the following 672-residue polypeptide: DNA ligase (672 aa).

NAD(+)-binding positions include 32-36 (DAEYD), 81-82 (SL), and glutamate 113. Lysine 115 (N6-AMP-lysine intermediate) is an active-site residue. Residues arginine 136, glutamate 173, lysine 290, and lysine 314 each contribute to the NAD(+) site. Zn(2+) contacts are provided by cysteine 408, cysteine 411, cysteine 426, and cysteine 432. The BRCT domain maps to 594-672 (EIDSPFAGKT…EAEMLRLLGE (79 aa)).

This sequence belongs to the NAD-dependent DNA ligase family. LigA subfamily. Requires Mg(2+) as cofactor. The cofactor is Mn(2+).

The catalysed reaction is NAD(+) + (deoxyribonucleotide)n-3'-hydroxyl + 5'-phospho-(deoxyribonucleotide)m = (deoxyribonucleotide)n+m + AMP + beta-nicotinamide D-nucleotide.. Functionally, DNA ligase that catalyzes the formation of phosphodiester linkages between 5'-phosphoryl and 3'-hydroxyl groups in double-stranded DNA using NAD as a coenzyme and as the energy source for the reaction. It is essential for DNA replication and repair of damaged DNA. The polypeptide is DNA ligase (Cronobacter sakazakii (strain ATCC BAA-894) (Enterobacter sakazakii)).